The chain runs to 86 residues: Large ribosomal subunit protein eL43 (86 aa).

Zn(2+)-binding residues include Cys-38, Cys-41, Cys-56, and Cys-59. Residues 38–59 (CPVCGRKAVRRISTGIWQCQKC) form a C4-type zinc finger.

Belongs to the eukaryotic ribosomal protein eL43 family. In terms of assembly, part of the 50S ribosomal subunit. Requires Zn(2+) as cofactor.

This Thermococcus kodakarensis (strain ATCC BAA-918 / JCM 12380 / KOD1) (Pyrococcus kodakaraensis (strain KOD1)) protein is Large ribosomal subunit protein eL43.